Reading from the N-terminus, the 64-residue chain is DNA gyrase inhibitor YacG (64 aa).

Residues Cys-10, Cys-13, Cys-29, and Cys-33 each contribute to the Zn(2+) site.

Belongs to the DNA gyrase inhibitor YacG family. Interacts with GyrB. It depends on Zn(2+) as a cofactor.

Inhibits all the catalytic activities of DNA gyrase by preventing its interaction with DNA. Acts by binding directly to the C-terminal domain of GyrB, which probably disrupts DNA binding by the gyrase. The protein is DNA gyrase inhibitor YacG of Pectobacterium atrosepticum (strain SCRI 1043 / ATCC BAA-672) (Erwinia carotovora subsp. atroseptica).